The sequence spans 458 residues: NADH-quinone oxidoreductase subunit N (458 aa).

Transmembrane regions (helical) follow at residues 4-24, 30-50, 62-82, 94-114, 118-138, 153-173, 194-214, 235-255, 261-281, 290-310, 318-338, 361-381, 397-417, and 438-458; these read LLPE…AVII, IISN…FKYS, GINI…SMII, LKFE…VAIS, FLLL…LAGF, FILG…IYGF, LGLI…LSSV, FTAA…KLII, INYN…AFGA, LMAY…LLHN, LLYI…LIML, IAAI…LTGF, FILA…YLKV, and LLLI…IISF.

It belongs to the complex I subunit 2 family. NDH-1 is composed of 14 different subunits. Subunits NuoA, H, J, K, L, M, N constitute the membrane sector of the complex.

It is found in the cell inner membrane. It carries out the reaction a quinone + NADH + 5 H(+)(in) = a quinol + NAD(+) + 4 H(+)(out). Functionally, NDH-1 shuttles electrons from NADH, via FMN and iron-sulfur (Fe-S) centers, to quinones in the respiratory chain. The immediate electron acceptor for the enzyme in this species is believed to be ubiquinone. Couples the redox reaction to proton translocation (for every two electrons transferred, four hydrogen ions are translocated across the cytoplasmic membrane), and thus conserves the redox energy in a proton gradient. The sequence is that of NADH-quinone oxidoreductase subunit N from Rickettsia felis (strain ATCC VR-1525 / URRWXCal2) (Rickettsia azadi).